Here is a 530-residue protein sequence, read N- to C-terminus: MTPFSKALRCIQNSPAKQSWKTLGIMPKHGICLPLFSLHTRNSCGIGEFLDLIPMISWCRKHGFQIIQILPINDSGEDSSPYNSISSVALNPLYLSLASLPHAQSVAYANAKLRTMQQLSKLPYVHYPQVKAAKWEFLRDYYQYVVKIGALKDEDFEIFCEKEKYWLRPYTVFRSIKYHLKGAPVNNWPKAYTDIKNFTEFEKQFQDECSFFSYLQYLCFQQMSQVKAFADDNHVFLKGDLPILISKDSCDVWYYRQFFSSSGSAGAPPDIYNTEGQNWHLPIYNMHNLVQDNYTWWKARLRYAENFYSLYRLDHIVGLFRLWVWDTSGNGKFQPDDPKEYLPQGTDILTQILRASRMLPIGEDLGSVPTDVKETLVKLGICGTRIPRWERNWEGDGNFIPLGEYSPLSVTSLSTHDSDTLALWWRHAPKEAQKFAQFLGMFFTPVLAEEDQKHILTLSHKTSSIFHINLINDYLALCPDLVSNNLKYERINMPGTVSKNNWVYRIKPSVEEILTHDAFNANIADIFSKI.

Belongs to the disproportionating enzyme family.

Its subcellular location is the cytoplasm. It carries out the reaction Transfers a segment of a (1-&gt;4)-alpha-D-glucan to a new position in an acceptor, which may be glucose or a (1-&gt;4)-alpha-D-glucan.. The sequence is that of 4-alpha-glucanotransferase (malQ) from Chlamydia caviae (strain ATCC VR-813 / DSM 19441 / 03DC25 / GPIC) (Chlamydophila caviae).